A 181-amino-acid chain; its full sequence is UPF0302 protein lmo1921 (181 aa).

It belongs to the UPF0302 family.

The protein is UPF0302 protein lmo1921 of Listeria monocytogenes serovar 1/2a (strain ATCC BAA-679 / EGD-e).